Here is a 449-residue protein sequence, read N- to C-terminus: Phosphoglucosamine mutase (449 aa).

Serine 101 functions as the Phosphoserine intermediate in the catalytic mechanism. Positions 101, 242, 244, and 246 each coordinate Mg(2+). A Phosphoserine modification is found at serine 101.

The protein belongs to the phosphohexose mutase family. Mg(2+) is required as a cofactor. Post-translationally, activated by phosphorylation.

The catalysed reaction is alpha-D-glucosamine 1-phosphate = D-glucosamine 6-phosphate. Its function is as follows. Catalyzes the conversion of glucosamine-6-phosphate to glucosamine-1-phosphate. This Bradyrhizobium sp. (strain BTAi1 / ATCC BAA-1182) protein is Phosphoglucosamine mutase.